The chain runs to 285 residues: Phosphatidylglycerol--prolipoprotein diacylglyceryl transferase (285 aa).

5 helical membrane-spanning segments follow: residues 17 to 37, 43 to 63, 78 to 98, 113 to 133, and 139 to 159; these read ALGLSPIAFDLGVWHLFGLTL, WYALAYITGILLAWRYVLFLL, LVFWSTLGILVGGRLAYVLFY, WEGGMSYHGGMIGVFLAIWWV, and LSWLRIADYIGCAAPIGLFLG. A 1,2-diacyl-sn-glycero-3-phospho-(1'-sn-glycerol) is bound at residue arginine 160. The next 3 membrane-spanning stretches (helical) occupy residues 195–215, 223–243, and 256–276; these read LYEAGLEGILLFAFLNYQFFA, GKLAGFFLVGYGLSRFIVEWF, and GLTMGQTLTIPMVIAGLWLII.

The protein belongs to the Lgt family.

It localises to the cell inner membrane. The catalysed reaction is L-cysteinyl-[prolipoprotein] + a 1,2-diacyl-sn-glycero-3-phospho-(1'-sn-glycerol) = an S-1,2-diacyl-sn-glyceryl-L-cysteinyl-[prolipoprotein] + sn-glycerol 1-phosphate + H(+). It participates in protein modification; lipoprotein biosynthesis (diacylglyceryl transfer). Its function is as follows. Catalyzes the transfer of the diacylglyceryl group from phosphatidylglycerol to the sulfhydryl group of the N-terminal cysteine of a prolipoprotein, the first step in the formation of mature lipoproteins. This Zymomonas mobilis subsp. mobilis (strain ATCC 31821 / ZM4 / CP4) protein is Phosphatidylglycerol--prolipoprotein diacylglyceryl transferase.